Reading from the N-terminus, the 82-residue chain is Cyclin-dependent protein kinase inhibitor SMR5 (82 aa).

The disordered stretch occupies residues 1 to 26 (MEEKNYDDGDTVTVDDDYQMGCTTPT). A compositionally biased stretch (acidic residues) spans 8 to 18 (DGDTVTVDDDY).

In terms of assembly, interacts with CDKA-1 and D-type cyclins. In terms of tissue distribution, expressed in columella cells in the roots and in root meristems after induction.

Probable cyclin-dependent protein kinase (CDK) inhibitor that functions as a repressor of mitosis in the endoreduplication cell cycle. Acts as a potent cell cycle inhibitor, regulating a hydroxyurea-dependent checkpoint in leaves. Essential to activate a high-light-dependent cell cycle checkpoint. The chain is Cyclin-dependent protein kinase inhibitor SMR5 from Arabidopsis thaliana (Mouse-ear cress).